We begin with the raw amino-acid sequence, 208 residues long: Granulocyte colony-stimulating factor (208 aa).

Positions 1-30 (MAQLSAQRRMKLMALQLLLWQSALWSGREA) are cleaved as a signal peptide. Cystine bridges form between Cys72-Cys78 and Cys100-Cys110. O-linked (GalNAc...) threonine glycosylation is present at Thr169.

It belongs to the IL-6 superfamily. In terms of assembly, monomer. Post-translationally, O-glycosylated.

The protein resides in the secreted. Functionally, granulocyte/macrophage colony-stimulating factors are cytokines that act in hematopoiesis by controlling the production, differentiation, and function of 2 related white cell populations of the blood, the granulocytes and the monocytes-macrophages. This CSF induces granulocytes. The polypeptide is Granulocyte colony-stimulating factor (Csf3) (Mus musculus (Mouse)).